The sequence spans 409 residues: Argininosuccinate synthase (409 aa).

ATP is bound by residues 15–23 (AYSGGLDTS) and A42. Y93 and S98 together coordinate L-citrulline. G123 provides a ligand contact to ATP. Residues T125, N129, and D130 each contribute to the L-aspartate site. N129 provides a ligand contact to L-citrulline. 5 residues coordinate L-citrulline: R133, S182, S191, E267, and Y279.

This sequence belongs to the argininosuccinate synthase family. Type 1 subfamily. Homotetramer.

It is found in the cytoplasm. It carries out the reaction L-citrulline + L-aspartate + ATP = 2-(N(omega)-L-arginino)succinate + AMP + diphosphate + H(+). It functions in the pathway amino-acid biosynthesis; L-arginine biosynthesis; L-arginine from L-ornithine and carbamoyl phosphate: step 2/3. This chain is Argininosuccinate synthase, found in Desulfitobacterium hafniense (strain Y51).